Reading from the N-terminus, the 90-residue chain is Barrier-to-autointegration factor-like protein (90 aa).

It belongs to the BAF family. As to quaternary structure, homodimer. Heterodimerizes with BANF1.

The protein localises to the nucleus. It is found in the cytoplasm. Its function is as follows. May play a role in BANF1 regulation and influence tissue-specific roles of BANF1. The chain is Barrier-to-autointegration factor-like protein (BANF2) from Bos taurus (Bovine).